The chain runs to 898 residues: Filament-like plant protein 7 (898 aa).

Coiled coils occupy residues 23–224 (EVVA…TAEA) and 287–320 (EKIN…LQFS). 3 disordered regions span residues 429 to 482 (DNRP…DIKS), 693 to 723 (PGNQ…KLEE), and 777 to 835 (KSNN…GGNS). Low complexity predominate over residues 434–459 (SSPICSSDSISATGPVENESNENSSE). Residues 460–469 (ATKTSGTVYS) show a composition bias toward polar residues. Residues 703–764 (VEEEANDKTA…KALTNSKETA (62 aa)) adopt a coiled-coil conformation. Over residues 808 to 822 (MKAEDHNTGESKDQK) the composition is skewed to basic and acidic residues.

It belongs to the FPP family. In terms of assembly, interacts with WPP/MAF proteins.

This is Filament-like plant protein 7 (FPP7) from Arabidopsis thaliana (Mouse-ear cress).